Here is a 132-residue protein sequence, read N- to C-terminus: Fatty acid-binding protein 9 (132 aa).

Phosphoserine is present on residues Ser-13, Ser-14, Ser-40, Ser-42, Ser-44, and Ser-91.

Belongs to the calycin superfamily. Fatty-acid binding protein (FABP) family. In terms of tissue distribution, testis.

Its subcellular location is the cytoplasm. This is Fatty acid-binding protein 9 (Fabp9) from Mus musculus (Mouse).